The chain runs to 303 residues: Pantothenate synthetase (303 aa).

A disordered region spans residues 1 to 21 (MIATGHGGAERRTTAGDGTAR). 48–55 (MGALHDGH) is a binding site for ATP. The active-site Proton donor is the His-55. Residue Gln-79 participates in (R)-pantoate binding. A beta-alanine-binding site is contributed by Gln-79. Residue 165-168 (GRKD) coordinates ATP. Gln-171 lines the (R)-pantoate pocket. Residue 202–205 (ASSR) participates in ATP binding.

The protein belongs to the pantothenate synthetase family. Homodimer.

It localises to the cytoplasm. The enzyme catalyses (R)-pantoate + beta-alanine + ATP = (R)-pantothenate + AMP + diphosphate + H(+). Its pathway is cofactor biosynthesis; (R)-pantothenate biosynthesis; (R)-pantothenate from (R)-pantoate and beta-alanine: step 1/1. In terms of biological role, catalyzes the condensation of pantoate with beta-alanine in an ATP-dependent reaction via a pantoyl-adenylate intermediate. In Acidothermus cellulolyticus (strain ATCC 43068 / DSM 8971 / 11B), this protein is Pantothenate synthetase.